Reading from the N-terminus, the 373-residue chain is Protodeoxyviolaceinate monooxygenase (373 aa).

2-20 (KILVIGAGPAGLVFASQLK) contributes to the FAD binding site.

FAD serves as cofactor.

It carries out the reaction protodeoxyviolaceinate + NADH + O2 + H(+) = protoviolaceinate + NAD(+) + H2O. The enzyme catalyses protodeoxyviolaceinate + NADPH + O2 + H(+) = protoviolaceinate + NADP(+) + H2O. It participates in pigment biosynthesis; violacein biosynthesis. Functionally, catalyzes the oxygenation of the 6-position of protodeoxyviolaceinate to form proviolacein. The protein is Protodeoxyviolaceinate monooxygenase (vioD) of Chromobacterium violaceum (strain ATCC 12472 / DSM 30191 / JCM 1249 / CCUG 213 / NBRC 12614 / NCIMB 9131 / NCTC 9757 / MK).